A 464-amino-acid polypeptide reads, in one-letter code: Probable glycine dehydrogenase (decarboxylating) subunit 1 (464 aa).

This sequence belongs to the GcvP family. N-terminal subunit subfamily. In terms of assembly, the glycine cleavage system is composed of four proteins: P, T, L and H. In this organism, the P 'protein' is a heterodimer of two subunits.

The enzyme catalyses N(6)-[(R)-lipoyl]-L-lysyl-[glycine-cleavage complex H protein] + glycine + H(+) = N(6)-[(R)-S(8)-aminomethyldihydrolipoyl]-L-lysyl-[glycine-cleavage complex H protein] + CO2. In terms of biological role, the glycine cleavage system catalyzes the degradation of glycine. The P protein binds the alpha-amino group of glycine through its pyridoxal phosphate cofactor; CO(2) is released and the remaining methylamine moiety is then transferred to the lipoamide cofactor of the H protein. The protein is Probable glycine dehydrogenase (decarboxylating) subunit 1 of Thiobacillus denitrificans (strain ATCC 25259 / T1).